The primary structure comprises 63 residues: Large ribosomal subunit protein uL30 (63 aa).

The protein belongs to the universal ribosomal protein uL30 family. In terms of assembly, part of the 50S ribosomal subunit.

The polypeptide is Large ribosomal subunit protein uL30 (Xanthomonas campestris pv. campestris (strain 8004)).